The primary structure comprises 905 residues: DNA mismatch repair protein MutS (905 aa).

Positions 388–410 are disordered; sequence LERPANPEGTYPTDAETSGDTLP. 638–645 lines the ATP pocket; the sequence is GPNMAGKS. The segment at 826–847 is disordered; sequence RDAARGTNSAPSRQTLPGLDLP. Over residues 831-840 the composition is skewed to polar residues; sequence GTNSAPSRQT.

The protein belongs to the DNA mismatch repair MutS family.

This protein is involved in the repair of mismatches in DNA. It is possible that it carries out the mismatch recognition step. This protein has a weak ATPase activity. The polypeptide is DNA mismatch repair protein MutS (Nitratidesulfovibrio vulgaris (strain DP4) (Desulfovibrio vulgaris)).